A 164-amino-acid chain; its full sequence is Hydroxylaminobenzene mutase HabB (164 aa).

4 consecutive transmembrane segments (helical) span residues 16–36, 50–70, 78–98, and 121–141; these read LLQLGIALFLLGLLTGFLLPM, GVLNGMFLLALGLMWPQLSLG, FGFAVYGTYANWLATLLAGFW, and LIAFALISLSLSMLVVCALAL.

It localises to the cell membrane. It carries out the reaction N-phenylhydroxylamine = 2-aminophenol. With respect to regulation, addition of ZnSO(4) decreases the activity to 70%. Catalyzes the rearrangement of hydroxylaminobenzene to 2-aminophenol. The sequence is that of Hydroxylaminobenzene mutase HabB (habB) from Ectopseudomonas oleovorans (Pseudomonas oleovorans).